Here is a 498-residue protein sequence, read N- to C-terminus: Tumor necrosis factor receptor superfamily member 8 (498 aa).

Positions 1–18 (MSALLTAAGLLFLGMLQA) are cleaved as a signal peptide. Topologically, residues 19-287 (FPTDRPLKTT…STGTPFLDPG (269 aa)) are extracellular. 2 TNFR-Cys repeats span residues 68-105 (QCAP…PRIC) and 106-146 (ECQP…DTIC). 5 disulfide bridges follow: cysteine 69/cysteine 81, cysteine 84/cysteine 97, cysteine 87/cysteine 105, cysteine 107/cysteine 121, and cysteine 128/cysteine 146. The interval 142 to 168 (KDTICELPSSGSGPNCSNPGDRKTLTS) is disordered. The segment covering 149-160 (PSSGSGPNCSNP) has biased composition (low complexity). N-linked (GlcNAc...) asparagine glycosylation is found at asparagine 156, asparagine 183, and asparagine 229. Residues 204-256 (ELVKVPESSSSKAREPSPDPGNAEKNMTLELPSPGTLPDISTSENSKEPASTA) form a disordered region. The segment covering 242 to 256 (DISTSENSKEPASTA) has biased composition (polar residues). A helical transmembrane segment spans residues 288 to 308 (PVLFWVAMVVLLVGSGSFLLC). Over 309–498 (YWKACRRRFQ…DHGPTTVSEK (190 aa)) the chain is Cytoplasmic. Residues 338-358 (DSCPTEKLTQPQRSGSVTDPS) show a composition bias toward polar residues. Disordered regions lie at residues 338 to 370 (DSCP…SPPP), 389 to 411 (LDDS…VSTE), and 436 to 498 (EVPE…VSEK). Serine 339 and serine 353 each carry phosphoserine. Basic and acidic residues-rich tracts occupy residues 402–411 (EPPEPRVSTE), 456–465 (EVDHAPHYPE), and 484–498 (EGGK…VSEK).

This sequence belongs to the TNFR8 family. In terms of assembly, interacts with TRAF1, TRAF2, TRAF3 and TRAF5. Detected in thymus and in activated splenocytes.

Its subcellular location is the cell membrane. Functionally, receptor for TNFSF8/CD30L. May play a role in the regulation of cellular growth and transformation of activated lymphoblasts. Regulates gene expression through activation of NF-kappa-B. The polypeptide is Tumor necrosis factor receptor superfamily member 8 (Mus musculus (Mouse)).